The chain runs to 229 residues: Wtf element wtf14 (229 aa).

Basic and acidic residues predominate over residues 1–26 (MENNHHLAKDSLDELNPKRGKGEHET). The interval 1-27 (MENNHHLAKDSLDELNPKRGKGEHETQ) is disordered. Transmembrane regions (helical) follow at residues 71–91 (IPAV…YLVF), 100–120 (VLFG…LLAT), 151–171 (LYAI…LMFF), and 188–208 (VIGV…PGLF).

It belongs to the WTF family.

It is found in the endoplasmic reticulum membrane. May act in meiotic drive. In Schizosaccharomyces kambucha (Fission yeast), this protein is Wtf element wtf14.